A 118-amino-acid chain; its full sequence is Transcription factor PAR1 (118 aa).

Positions 1–58 are disordered; the sequence is MEETLATPDATRRSLSPSCSATVKSRAAGFERRTKRRLSETNASVREDREEAEEEEDE. The span at 13–23 shows a compositional bias: polar residues; that stretch reads RSLSPSCSATV. The 50-residue stretch at 43–92 folds into the bHLH domain; it reads ASVREDREEAEEEEDEVKEKIEALQRIIPGGAALGVDALFEETAGYILSL.

The protein belongs to the bHLH protein family. In terms of assembly, homodimer.

The protein localises to the nucleus. In terms of biological role, atypical bHLH transcription factor that acts as a negative regulator of a variety of shade avoidance syndrome (SAS) responses, including seedling elongation and photosynthetic pigment accumulation. Acts as a direct transcriptional repressor of two auxin-responsive genes, SAUR15 and SAUR68. May function in integrating shade and hormone transcriptional networks in response to light and auxin changes. In Arabidopsis thaliana (Mouse-ear cress), this protein is Transcription factor PAR1 (PAR1).